Consider the following 95-residue polypeptide: Large ribosomal subunit protein bL25 (95 aa).

The protein belongs to the bacterial ribosomal protein bL25 family. In terms of assembly, part of the 50S ribosomal subunit; part of the 5S rRNA/L5/L18/L25 subcomplex. Contacts the 5S rRNA. Binds to the 5S rRNA independently of L5 and L18.

In terms of biological role, this is one of the proteins that binds to the 5S RNA in the ribosome where it forms part of the central protuberance. The chain is Large ribosomal subunit protein bL25 from Shewanella putrefaciens (strain CN-32 / ATCC BAA-453).